The following is a 505-amino-acid chain: Protein DETOXIFICATION 50 (505 aa).

12 helical membrane-spanning segments follow: residues 46 to 66 (LVLT…FLGG), 78 to 98 (AAAF…MGVE), 121 to 141 (IILL…MEKI), 155 to 175 (AHIF…LHPL), 194 to 214 (IASF…GLGI), 219 to 239 (LSGV…ICFF), 275 to 295 (ISVC…GFLL), 305 to 325 (GILI…SLGV), 344 to 364 (AAIV…AFTV), 380 to 400 (IMKL…GNCP), 424 to 444 (AFYA…GFGF), and 446 to 466 (GLWL…MAAT).

The protein belongs to the multi antimicrobial extrusion (MATE) (TC 2.A.66.1) family. As to expression, preferentially expressed in rosette leaves. Detected mainly in the vascular tissues and guard cells. Mostly detected at reproductive stages in young anthers, in mature pollens and during pollen germination on the pistil. Also expressed in developing seeds.

Its subcellular location is the cell membrane. The protein resides in the late endosome membrane. Functionally, functions as a multidrug and toxin extrusion transporter in the export of abscisic acid (ABA) in guard cells. Plays a role in ABA-mediated growth inhibition and responses to drought conditions. May act as a negative regulator of hypocotyl cell elongation in the light. This chain is Protein DETOXIFICATION 50, found in Arabidopsis thaliana (Mouse-ear cress).